The primary structure comprises 371 residues: Transcriptional regulator of yeast form adherence 2 (371 aa).

The C3H1-type 1 zinc-finger motif lies at 16-44 (RNPAVLCSFYSKIGACRHGEKCSKKHLKP). Polar residues predominate over residues 94 to 107 (TVSQIDDSPHSNSG). Positions 94 to 194 (TVSQIDDSPH…NIEDAKLEDT (101 aa)) are disordered. A compositionally biased stretch (acidic residues) spans 115-124 (VETQEVETEN). Basic and acidic residues predominate over residues 132 to 194 (GDVKIDHNED…NIEDAKLEDT (63 aa)). An RRM domain is found at 192-279 (EDTEKDKLPE…KPVYSDLSPV (88 aa)). Residues 281-309 (DFNDACCEEYRDYHDCQRGAMCNYMHVRL) form a C3H1-type 2 zinc finger. The interval 337-371 (ELPGDIRSSSSTNDDETNGNENGISSTMAVLEQLS) is disordered. Residues 355 to 371 (GNENGISSTMAVLEQLS) are compositionally biased toward polar residues.

Its subcellular location is the nucleus. Its function is as follows. Transcription factor required for yeast cell adherence to silicone substrate. The protein is Transcriptional regulator of yeast form adherence 2 (TRY2) of Candida albicans (strain SC5314 / ATCC MYA-2876) (Yeast).